The sequence spans 560 residues: Arginine--tRNA ligase (560 aa).

The 'HIGH' region signature appears at 122–132; sequence ANPNGPLHIGH.

It belongs to the class-I aminoacyl-tRNA synthetase family.

It localises to the cytoplasm. It catalyses the reaction tRNA(Arg) + L-arginine + ATP = L-arginyl-tRNA(Arg) + AMP + diphosphate. This Methanothermobacter thermautotrophicus (strain ATCC 29096 / DSM 1053 / JCM 10044 / NBRC 100330 / Delta H) (Methanobacterium thermoautotrophicum) protein is Arginine--tRNA ligase (argS).